Consider the following 390-residue polypeptide: Lipoyl synthase, mitochondrial (390 aa).

Residues 1-18 (MALYRAPKLQRSLLNRCL) constitute a mitochondrion transit peptide. [4Fe-4S] cluster is bound by residues cysteine 99, cysteine 104, cysteine 110, cysteine 137, cysteine 141, cysteine 144, and serine 351. In terms of domain architecture, Radical SAM core spans 120 to 340 (AEGRSAATAT…KQVAEDLGFL (221 aa)).

It belongs to the radical SAM superfamily. Lipoyl synthase family. [4Fe-4S] cluster is required as a cofactor.

Its subcellular location is the mitochondrion. The catalysed reaction is [[Fe-S] cluster scaffold protein carrying a second [4Fe-4S](2+) cluster] + N(6)-octanoyl-L-lysyl-[protein] + 2 oxidized [2Fe-2S]-[ferredoxin] + 2 S-adenosyl-L-methionine + 4 H(+) = [[Fe-S] cluster scaffold protein] + N(6)-[(R)-dihydrolipoyl]-L-lysyl-[protein] + 4 Fe(3+) + 2 hydrogen sulfide + 2 5'-deoxyadenosine + 2 L-methionine + 2 reduced [2Fe-2S]-[ferredoxin]. It functions in the pathway protein modification; protein lipoylation via endogenous pathway; protein N(6)-(lipoyl)lysine from octanoyl-[acyl-carrier-protein]: step 2/2. Its function is as follows. Catalyzes the radical-mediated insertion of two sulfur atoms into the C-6 and C-8 positions of the octanoyl moiety bound to the lipoyl domains of lipoate-dependent enzymes, thereby converting the octanoylated domains into lipoylated derivatives. The protein is Lipoyl synthase, mitochondrial of Coprinopsis cinerea (strain Okayama-7 / 130 / ATCC MYA-4618 / FGSC 9003) (Inky cap fungus).